Consider the following 337-residue polypeptide: Nucleoid-associated protein HS_0228 (337 aa).

This sequence belongs to the YejK family.

It localises to the cytoplasm. Its subcellular location is the nucleoid. In Histophilus somni (strain 129Pt) (Haemophilus somnus), this protein is Nucleoid-associated protein HS_0228.